The primary structure comprises 109 residues: Large ribosomal subunit protein uL24 (109 aa).

This sequence belongs to the universal ribosomal protein uL24 family. In terms of assembly, part of the 50S ribosomal subunit.

In terms of biological role, one of two assembly initiator proteins, it binds directly to the 5'-end of the 23S rRNA, where it nucleates assembly of the 50S subunit. Its function is as follows. One of the proteins that surrounds the polypeptide exit tunnel on the outside of the subunit. The chain is Large ribosomal subunit protein uL24 from Ehrlichia canis (strain Jake).